Reading from the N-terminus, the 192-residue chain is Iodate reductase subunit IdrB (192 aa).

The segment at residues 1-52 is a signal peptide (tat-type signal); sequence MSENIIPVRAVPAHDHEHDGERACMSRRRFLLFGGTSVALLSIASLPGVAQV. Positions 102-173 constitute a Rieske domain; that stretch reads GADKDIVAFN…LEVQGDDIYA (72 aa). Residues C114, H116, C135, and H138 each coordinate [2Fe-2S] cluster.

This sequence belongs to the AOX family. As to quaternary structure, the iodate reductase (Idr) complex is composed of a molybdopterin-dependent iodate reductase (IdrA and IdrB subunits) and two associated peroxidases (IdrP1 and IdrP2). The cofactor is [2Fe-2S] cluster. Post-translationally, predicted to be exported by the Tat system. The position of the signal peptide cleavage has not been experimentally proven.

The protein resides in the periplasm. Functionally, involved in iodate respiration. Probably catalyzes the reduction of iodate (IO(3)(-)) to hypoiodous acid (HIO) and H(2)O(2), using a reduced cytochrome c as the electron donor. This Pseudomonas sp. (strain SCT) protein is Iodate reductase subunit IdrB.